The primary structure comprises 472 residues: Serine incorporator 3 (472 aa).

The Extracellular portion of the chain corresponds to 1 to 95 (MGAVLGVFSL…KECDVLVRYK (95 aa)). N34 carries an N-linked (GlcNAc...) asparagine glycan. Residues 96 to 116 (AVYRISFALAVFFFAFSLLML) traverse the membrane as a helical segment. Residues 117-131 (NVKTSKDPRAAIHNG) are Cytoplasmic-facing. The chain crosses the membrane as a helical span at residues 132–152 (FWFFKIAAIVGVMVGSFYIPG). At 153–158 (GHFNTA) the chain is on the extracellular side. The chain crosses the membrane as a helical span at residues 159-179 (WFVIGMVGAAFFILIQLVLLV). The Cytoplasmic portion of the chain corresponds to 180–202 (DFAHSWNESWVNRMEEGNPKCWY). A helical transmembrane segment spans residues 203-223 (AALLSVTSLFYILSIIFAGLL). The Extracellular segment spans residues 224-238 (YTYYTKPDGCTENKF). A helical membrane pass occupies residues 239-259 (FISFNLILCVVISVLSIHPKI). Topologically, residues 260–328 (QEHQPRSGLL…APTPAVPLQS (69 aa)) are cytoplasmic. The helical transmembrane segment at 329–349 (GPSLNKENFIGLLVFVLSLSY) threads the bilayer. Residues 350-405 (SSIRNSSNSQVSKLTLSGSDSVILRDTAANGASDEEDGRPRRAVDNEREGVQYNYS) lie on the Extracellular side of the membrane. N-linked (GlcNAc...) asparagine glycosylation is present at N354. S370 is modified (phosphoserine). N403 carries an N-linked (GlcNAc...) asparagine glycan. Residues 406-426 (MFHLMLCSASLYIMMTLTNWY) form a helical membrane-spanning segment. Residues 427–445 (SPDANFQSMTSKWPAVWVK) are Cytoplasmic-facing. Residues 446–466 (ISSSWVCLLLYVWTLVAPLVL) traverse the membrane as a helical segment. The Extracellular segment spans residues 467 to 472 (TNRDFS).

Belongs to the TDE1 family. In terms of processing, N-glycosylated.

The protein resides in the cell membrane. It localises to the golgi apparatus membrane. The enzyme catalyses a 1,2-diacyl-sn-glycero-3-phospho-L-serine(in) = a 1,2-diacyl-sn-glycero-3-phospho-L-serine(out). The catalysed reaction is a 1,2-diacyl-sn-glycero-3-phosphocholine(in) = a 1,2-diacyl-sn-glycero-3-phosphocholine(out). It carries out the reaction a 1,2-diacyl-sn-glycero-3-phosphoethanolamine(in) = a 1,2-diacyl-sn-glycero-3-phosphoethanolamine(out). Its function is as follows. Restriction factor required to restrict infectivity of gammaretroviruses: acts by inhibiting an early step of viral infection. Impairs the penetration of the viral particle into the cytoplasm. Non-ATP-dependent, non-specific lipid transporter for phosphatidylserine, phosphatidylcholine, and phosphatidylethanolamine. Functions as a scramblase that flips lipids in both directions across the membrane. Phospholipid scrambling results in gammaretroviral surface exposure of phosphatidylserine and loss of membrane asymmetry, which leads to loss of infectivity. In Bos taurus (Bovine), this protein is Serine incorporator 3 (SERINC3).